Consider the following 97-residue polypeptide: Cell division protein FtsL (97 aa).

Residues 1–11 are Cytoplasmic-facing; the sequence is MSRLFVKRLPT. A helical transmembrane segment spans residues 12-32; sequence GSFLMLLLYIGLLLSAIAVAY. Over 33 to 97 the chain is Periplasmic; that stretch reads STYWNRQLLN…DPAEVRMVAP (65 aa).

The protein belongs to the FtsL family. As to quaternary structure, part of a complex composed of FtsB, FtsL and FtsQ.

It localises to the cell inner membrane. Essential cell division protein. May link together the upstream cell division proteins, which are predominantly cytoplasmic, with the downstream cell division proteins, which are predominantly periplasmic. The chain is Cell division protein FtsL from Pseudomonas aeruginosa (strain ATCC 15692 / DSM 22644 / CIP 104116 / JCM 14847 / LMG 12228 / 1C / PRS 101 / PAO1).